A 407-amino-acid chain; its full sequence is Biflaviolin synthase CYP158A1 (407 aa).

The segment covering 1–11 (MTQETTTLTGQ) has biased composition (polar residues). A disordered region spans residues 1-20 (MTQETTTLTGQSPPPVRDWP). Residues Arg92, Tyr199, and 290 to 291 (HR) each bind flaviolin. A heme-binding site is contributed by Cys356.

The protein belongs to the cytochrome P450 family. Heme is required as a cofactor.

The enzyme catalyses 2 flaviolin + 2 reduced [2Fe-2S]-[ferredoxin] + O2 + H(+) = 3,3'-biflaviolin + 2 oxidized [2Fe-2S]-[ferredoxin] + 2 H2O. The catalysed reaction is 2 flaviolin + 2 reduced [2Fe-2S]-[ferredoxin] + O2 + H(+) = 3,8'-biflaviolin + 2 oxidized [2Fe-2S]-[ferredoxin] + 2 H2O. It functions in the pathway pigment biosynthesis. In terms of biological role, catalyzes oxidative C-C coupling reaction to polymerize flaviolin and form highly conjugated pigments which protect the soil bacterium from deleterious effects of UV irradiation (two isomers of biflaviolin and one triflaviolin). The chain is Biflaviolin synthase CYP158A1 from Streptomyces coelicolor (strain ATCC BAA-471 / A3(2) / M145).